A 459-amino-acid chain; its full sequence is Exodeoxyribonuclease 7 large subunit (459 aa).

It belongs to the XseA family. Heterooligomer composed of large and small subunits.

The protein localises to the cytoplasm. It carries out the reaction Exonucleolytic cleavage in either 5'- to 3'- or 3'- to 5'-direction to yield nucleoside 5'-phosphates.. Its function is as follows. Bidirectionally degrades single-stranded DNA into large acid-insoluble oligonucleotides, which are then degraded further into small acid-soluble oligonucleotides. The polypeptide is Exodeoxyribonuclease 7 large subunit (Pseudomonas fluorescens (strain Pf0-1)).